Here is a 524-residue protein sequence, read N- to C-terminus: Solute carrier family 40 member 1 (524 aa).

Residues 1-18 show a composition bias toward basic and acidic residues; sequence MENETELRVVHQEEQQRE. Residues 1-30 form a disordered region; the sequence is MENETELRVVHQEEQQREEGEDESQPQNPP. A run of 11 helical transmembrane segments spans residues 70 to 92, 109 to 129, 137 to 157, 191 to 211, 218 to 238, 314 to 334, 347 to 367, 380 to 400, 409 to 429, 446 to 466, and 472 to 492; these read SLLL…GPIV, LLFQ…LLLV, LPVF…GVLS, GIDL…ISFV, ITFA…FISV, VVLP…FGTL, YIIG…TLVY, GLWS…SIWV, MLMA…LAVI, GVQN…GIIV, and FWIL…LYTI.

It belongs to the ferroportin (FP) (TC 2.A.100) family. SLC40A subfamily.

It localises to the membrane. May be involved in iron transport and iron homeostasis. The protein is Solute carrier family 40 member 1 (IREG1) of Arabidopsis thaliana (Mouse-ear cress).